The chain runs to 366 residues: Cyanide hydratase (366 aa).

In terms of domain architecture, CN hydrolase spans 6–285; sequence YKAAAVTSEP…DGLMFVDIDL (280 aa). Glu-46 acts as the Proton acceptor in catalysis. The active site involves Lys-128. Cys-163 functions as the Nucleophile in the catalytic mechanism.

This sequence belongs to the carbon-nitrogen hydrolase superfamily. Nitrilase family. Oligomer of dimers, forming left-handed helical fibers.

It carries out the reaction formamide = hydrogen cyanide + H2O. Catalyzes the hydration of cyanide to formamide. Degradation of cyanide may be important for plant pathogenic fungi in infection of cyanogenic plants. Can also transform some nitriles like 2-cyanopyridine and fumaronitrile. In Pyrenophora teres f. teres (strain 0-1) (Barley net blotch fungus), this protein is Cyanide hydratase.